Reading from the N-terminus, the 502-residue chain is Smr domain-containing protein C1235.03 (502 aa).

The disordered stretch occupies residues 150-184 (LITSNIGHRSRQRKKKTKKATNSRKPLSKFQSNTE). A compositionally biased stretch (basic residues) spans 157–171 (HRSRQRKKKTKKATN). The Smr domain occupies 411–459 (SLDLHGATVREAKTIVRERVAAWWAKEADTSPNSIRPFVIVTGRGNHSI).

The protein localises to the nucleus. The protein resides in the nucleolus. The protein is Smr domain-containing protein C1235.03 of Schizosaccharomyces pombe (strain 972 / ATCC 24843) (Fission yeast).